We begin with the raw amino-acid sequence, 95 residues long: Enhancer of yellow 2 transcription factor (95 aa).

Belongs to the ENY2 family. As to quaternary structure, component of the nuclear pore complex (NPC)-associated AMEX complex (anchoring and mRNA export complex), composed of at least e(y)2 and xmas-2. Component of the SAGA transcription coactivator-HAT complexes, at least composed of Ada2b, e(y)2, Pcaf/Gcn5, Taf10 and Nipped-A/Trrap. Within the SAGA complex, e(y)2, Sgf11, and not/nonstop form an additional subcomplex of SAGA called the DUB module (deubiquitination module). Component of the THO complex, composed of at least e(y)2, HPR1, THO2, THOC5, THOC6 and THOC7. Interacts with e(y)1. Interacts with su(Hw) (via zinc fingers). Interacts with xmas-2; required for localization to the nuclear periphery. Interacts with the nuclear pore complex (NPC).

It is found in the nucleus. Its subcellular location is the nucleoplasm. It localises to the cytoplasm. Involved in mRNA export coupled transcription activation by association with both the AMEX and the SAGA complexes. The SAGA complex is a multiprotein complex that activates transcription by remodeling chromatin and mediating histone acetylation and deubiquitination. Within the SAGA complex, participates in a subcomplex that specifically deubiquitinates histone H2B. The SAGA complex is recruited to specific gene promoters by activators, where it is required for transcription. Required for nuclear receptor-mediated transactivation. Involved in transcription elongation by recruiting the THO complex onto nascent mRNA. The AMEX complex functions in docking export-competent ribonucleoprotein particles (mRNPs) to the nuclear entrance of the nuclear pore complex (nuclear basket). AMEX participates in mRNA export and accurate chromatin positioning in the nucleus by tethering genes to the nuclear periphery. The polypeptide is Enhancer of yellow 2 transcription factor (Drosophila virilis (Fruit fly)).